A 676-amino-acid chain; its full sequence is UvrABC system protein B (676 aa).

The Helicase ATP-binding domain maps to 26-414 (EGLENGLAHQ…SDGEIAEQVV (389 aa)). Residue 39–46 (GVTGSGKT) coordinates ATP. The short motif at 92–115 (YFDYYQPEAYVPTTDTFIEKDSSV) is the Beta-hairpin element. Positions 432–598 (QVDDLLSEIR…ALKKDVADIL (167 aa)) constitute a Helicase C-terminal domain. The 36-residue stretch at 636 to 671 (EKAIQKLESKMYQHAKDLEFEQAAQVRDEIDNLRKQ) folds into the UVR domain.

This sequence belongs to the UvrB family. As to quaternary structure, forms a heterotetramer with UvrA during the search for lesions. Interacts with UvrC in an incision complex.

It localises to the cytoplasm. In terms of biological role, the UvrABC repair system catalyzes the recognition and processing of DNA lesions. A damage recognition complex composed of 2 UvrA and 2 UvrB subunits scans DNA for abnormalities. Upon binding of the UvrA(2)B(2) complex to a putative damaged site, the DNA wraps around one UvrB monomer. DNA wrap is dependent on ATP binding by UvrB and probably causes local melting of the DNA helix, facilitating insertion of UvrB beta-hairpin between the DNA strands. Then UvrB probes one DNA strand for the presence of a lesion. If a lesion is found the UvrA subunits dissociate and the UvrB-DNA preincision complex is formed. This complex is subsequently bound by UvrC and the second UvrB is released. If no lesion is found, the DNA wraps around the other UvrB subunit that will check the other stand for damage. The protein is UvrABC system protein B of Aliivibrio fischeri (strain ATCC 700601 / ES114) (Vibrio fischeri).